The sequence spans 105 residues: Heat shock protein HspQ (105 aa).

The protein belongs to the HspQ family.

Its subcellular location is the cytoplasm. In terms of biological role, involved in the degradation of certain denaturated proteins, including DnaA, during heat shock stress. This is Heat shock protein HspQ from Yersinia enterocolitica serotype O:8 / biotype 1B (strain NCTC 13174 / 8081).